Reading from the N-terminus, the 699-residue chain is Elongation factor G (699 aa).

In terms of domain architecture, tr-type G spans 8–288 (EDYRNFGIMA…AVVDYLPSPI (281 aa)). Residues 17 to 24 (AHIDAGKT), 86 to 90 (DTPGH), and 140 to 143 (NKMD) each bind GTP.

The protein belongs to the TRAFAC class translation factor GTPase superfamily. Classic translation factor GTPase family. EF-G/EF-2 subfamily.

It localises to the cytoplasm. Catalyzes the GTP-dependent ribosomal translocation step during translation elongation. During this step, the ribosome changes from the pre-translocational (PRE) to the post-translocational (POST) state as the newly formed A-site-bound peptidyl-tRNA and P-site-bound deacylated tRNA move to the P and E sites, respectively. Catalyzes the coordinated movement of the two tRNA molecules, the mRNA and conformational changes in the ribosome. The sequence is that of Elongation factor G from Rhizobium meliloti (strain 1021) (Ensifer meliloti).